Here is a 358-residue protein sequence, read N- to C-terminus: Peptide chain release factor 1 (358 aa).

Q233 carries the post-translational modification N5-methylglutamine.

Belongs to the prokaryotic/mitochondrial release factor family. Methylated by PrmC. Methylation increases the termination efficiency of RF1.

It is found in the cytoplasm. Peptide chain release factor 1 directs the termination of translation in response to the peptide chain termination codons UAG and UAA. The sequence is that of Peptide chain release factor 1 from Staphylococcus carnosus (strain TM300).